A 522-amino-acid polypeptide reads, in one-letter code: Putative ribose/galactose/methyl galactoside import ATP-binding protein (522 aa).

ABC transporter domains lie at 7–244 (LEMV…VGRE) and 254–498 (PKLG…TGQA). 39–46 (GENGAGKS) provides a ligand contact to ATP.

It belongs to the ABC transporter superfamily. Carbohydrate importer 2 (CUT2) (TC 3.A.1.2) family.

It is found in the cell membrane. The catalysed reaction is D-ribose(out) + ATP + H2O = D-ribose(in) + ADP + phosphate + H(+). The enzyme catalyses D-galactose(out) + ATP + H2O = D-galactose(in) + ADP + phosphate + H(+). Functionally, part of an ABC transporter complex involved in carbohydrate import. Could be involved in ribose, galactose and/or methyl galactoside import. Responsible for energy coupling to the transport system. The protein is Putative ribose/galactose/methyl galactoside import ATP-binding protein of Halalkalibacterium halodurans (strain ATCC BAA-125 / DSM 18197 / FERM 7344 / JCM 9153 / C-125) (Bacillus halodurans).